A 340-amino-acid polypeptide reads, in one-letter code: Phosphoribosylformylglycinamidine cyclo-ligase (340 aa).

Belongs to the AIR synthase family.

Its subcellular location is the cytoplasm. It carries out the reaction 2-formamido-N(1)-(5-O-phospho-beta-D-ribosyl)acetamidine + ATP = 5-amino-1-(5-phospho-beta-D-ribosyl)imidazole + ADP + phosphate + H(+). The protein operates within purine metabolism; IMP biosynthesis via de novo pathway; 5-amino-1-(5-phospho-D-ribosyl)imidazole from N(2)-formyl-N(1)-(5-phospho-D-ribosyl)glycinamide: step 2/2. This chain is Phosphoribosylformylglycinamidine cyclo-ligase, found in Streptococcus agalactiae serotype Ia (strain ATCC 27591 / A909 / CDC SS700).